A 316-amino-acid polypeptide reads, in one-letter code: tRNA dimethylallyltransferase (316 aa).

Residue glycine 12–threonine 19 participates in ATP binding. Residue threonine 14 to threonine 19 coordinates substrate. 2 interaction with substrate tRNA regions span residues aspartate 37–leucine 40 and glutamine 161–arginine 165.

The protein belongs to the IPP transferase family. Monomer. The cofactor is Mg(2+).

The catalysed reaction is adenosine(37) in tRNA + dimethylallyl diphosphate = N(6)-dimethylallyladenosine(37) in tRNA + diphosphate. Its function is as follows. Catalyzes the transfer of a dimethylallyl group onto the adenine at position 37 in tRNAs that read codons beginning with uridine, leading to the formation of N6-(dimethylallyl)adenosine (i(6)A). This Idiomarina loihiensis (strain ATCC BAA-735 / DSM 15497 / L2-TR) protein is tRNA dimethylallyltransferase.